Consider the following 203-residue polypeptide: Small ribosomal subunit protein uS4 (203 aa).

An S4 RNA-binding domain is found at 93–154 (RRFDNVVFRA…KSKNMDAVTE (62 aa)).

This sequence belongs to the universal ribosomal protein uS4 family. In terms of assembly, part of the 30S ribosomal subunit. Contacts protein S5. The interaction surface between S4 and S5 is involved in control of translational fidelity.

Functionally, one of the primary rRNA binding proteins, it binds directly to 16S rRNA where it nucleates assembly of the body of the 30S subunit. Its function is as follows. With S5 and S12 plays an important role in translational accuracy. In Prosthecochloris aestuarii (strain DSM 271 / SK 413), this protein is Small ribosomal subunit protein uS4.